The chain runs to 314 residues: Methionyl-tRNA formyltransferase (314 aa).

112-115 (SLLP) contacts (6S)-5,6,7,8-tetrahydrofolate.

This sequence belongs to the Fmt family.

The enzyme catalyses L-methionyl-tRNA(fMet) + (6R)-10-formyltetrahydrofolate = N-formyl-L-methionyl-tRNA(fMet) + (6S)-5,6,7,8-tetrahydrofolate + H(+). Attaches a formyl group to the free amino group of methionyl-tRNA(fMet). The formyl group appears to play a dual role in the initiator identity of N-formylmethionyl-tRNA by promoting its recognition by IF2 and preventing the misappropriation of this tRNA by the elongation apparatus. The protein is Methionyl-tRNA formyltransferase of Legionella pneumophila (strain Corby).